We begin with the raw amino-acid sequence, 364 residues long: Mannose-1-phosphate guanyltransferase (364 aa).

Belongs to the transferase hexapeptide repeat family.

The protein resides in the cytoplasm. It carries out the reaction alpha-D-mannose 1-phosphate + GTP + H(+) = GDP-alpha-D-mannose + diphosphate. Its pathway is nucleotide-sugar biosynthesis; GDP-alpha-D-mannose biosynthesis; GDP-alpha-D-mannose from alpha-D-mannose 1-phosphate (GTP route): step 1/1. Functionally, involved in cell wall synthesis where it is required for glycosylation. Involved in cell cycle progression through cell-size checkpoint. The polypeptide is Mannose-1-phosphate guanyltransferase (MPG1) (Pichia angusta (Yeast)).